Consider the following 129-residue polypeptide: Glycine cleavage system H protein (129 aa).

The 83-residue stretch at 24–106 folds into the Lipoyl-binding domain; the sequence is TYTVGITEHA…YAGGWIFKIK (83 aa). K65 bears the N6-lipoyllysine mark.

The protein belongs to the GcvH family. In terms of assembly, the glycine cleavage system is composed of four proteins: P, T, L and H. It depends on (R)-lipoate as a cofactor.

In terms of biological role, the glycine cleavage system catalyzes the degradation of glycine. The H protein shuttles the methylamine group of glycine from the P protein to the T protein. This Escherichia coli O127:H6 (strain E2348/69 / EPEC) protein is Glycine cleavage system H protein.